The sequence spans 573 residues: 2-succinyl-5-enolpyruvyl-6-hydroxy-3-cyclohexene-1-carboxylate synthase (573 aa).

This sequence belongs to the TPP enzyme family. MenD subfamily. Homodimer. Requires Mg(2+) as cofactor. Mn(2+) is required as a cofactor. Thiamine diphosphate serves as cofactor.

It carries out the reaction isochorismate + 2-oxoglutarate + H(+) = 5-enolpyruvoyl-6-hydroxy-2-succinyl-cyclohex-3-ene-1-carboxylate + CO2. The protein operates within quinol/quinone metabolism; 1,4-dihydroxy-2-naphthoate biosynthesis; 1,4-dihydroxy-2-naphthoate from chorismate: step 2/7. Its pathway is quinol/quinone metabolism; menaquinone biosynthesis. Functionally, catalyzes the thiamine diphosphate-dependent decarboxylation of 2-oxoglutarate and the subsequent addition of the resulting succinic semialdehyde-thiamine pyrophosphate anion to isochorismate to yield 2-succinyl-5-enolpyruvyl-6-hydroxy-3-cyclohexene-1-carboxylate (SEPHCHC). The polypeptide is 2-succinyl-5-enolpyruvyl-6-hydroxy-3-cyclohexene-1-carboxylate synthase (Shewanella baltica (strain OS185)).